The chain runs to 86 residues: Large ribosomal subunit protein bL27 (86 aa).

Residues 1 to 11 (MATKKAGGGSR) are compositionally biased toward gly residues. The tract at residues 1-24 (MATKKAGGGSRNGRDSAGRRLGVK) is disordered.

The protein belongs to the bacterial ribosomal protein bL27 family.

The protein is Large ribosomal subunit protein bL27 of Rickettsia africae (strain ESF-5).